We begin with the raw amino-acid sequence, 298 residues long: Tyrosine recombinase XerD (298 aa).

The Core-binding (CB) domain occupies 3 to 88 (TLEHPLIDRF…GLRGFYRYCL (86 aa)). Residues 109–292 (PLPKSLSEAD…ARARLQDLHA (184 aa)) enclose the Tyr recombinase domain. Catalysis depends on residues Arg-149, Lys-173, His-244, Arg-247, and His-270. The O-(3'-phospho-DNA)-tyrosine intermediate role is filled by Tyr-279.

Belongs to the 'phage' integrase family. XerD subfamily. In terms of assembly, forms a cyclic heterotetrameric complex composed of two molecules of XerC and two molecules of XerD.

It is found in the cytoplasm. Site-specific tyrosine recombinase, which acts by catalyzing the cutting and rejoining of the recombining DNA molecules. The XerC-XerD complex is essential to convert dimers of the bacterial chromosome into monomers to permit their segregation at cell division. It also contributes to the segregational stability of plasmids. The sequence is that of Tyrosine recombinase XerD from Pseudomonas aeruginosa (strain ATCC 15692 / DSM 22644 / CIP 104116 / JCM 14847 / LMG 12228 / 1C / PRS 101 / PAO1).